The following is a 117-amino-acid chain: NADH-ubiquinone oxidoreductase chain 3 (117 aa).

Transmembrane regions (helical) follow at residues 4–24 (ILIY…LGLI), 57–77 (FFLL…LLPL), and 88–108 (WPLT…FHEW).

Belongs to the complex I subunit 3 family.

It localises to the mitochondrion membrane. The enzyme catalyses a ubiquinone + NADH + 5 H(+)(in) = a ubiquinol + NAD(+) + 4 H(+)(out). Its function is as follows. Core subunit of the mitochondrial membrane respiratory chain NADH dehydrogenase (Complex I) that is believed to belong to the minimal assembly required for catalysis. Complex I functions in the transfer of electrons from NADH to the respiratory chain. The immediate electron acceptor for the enzyme is believed to be ubiquinone. The polypeptide is NADH-ubiquinone oxidoreductase chain 3 (ND3) (Heterololigo bleekeri (Spear squid)).